The primary structure comprises 224 residues: Glutamate/aspartate import permease protein GltK (224 aa).

The Periplasmic segment spans residues 1-19 (MYEFDWSSIVPSLPYLLDG). The helical transmembrane segment at 20 to 40 (LVITLKITVTAVVIGILWGTM) threads the bilayer. In terms of domain architecture, ABC transmembrane type-1 spans 20–216 (LVITLKITVT…VISLSASLLV (197 aa)). Topologically, residues 41–67 (LAVMRLSSFAPVAWFAKAYVNVFRSIP) are cytoplasmic. Residues 68-88 (LVMVLLWFYLIVPGFLQNVLG) traverse the membrane as a helical segment. Topologically, residues 89–94 (LSPKND) are periplasmic. The helical transmembrane segment at 95-112 (IRLISAMVAFSMFEAAYY) threads the bilayer. Residues 113-154 (SEIIRAGIQSISRGQSSAALALGMTHWQSMKLIILPQAFRAM) lie on the Cytoplasmic side of the membrane. A helical transmembrane segment spans residues 155-175 (VPLLLTQGIVLFQDTSLVYVL). Residues 176 to 196 (SLADFFRTASTIGERDGTQVE) lie on the Periplasmic side of the membrane. Residues 197 to 217 (MILFAGFVYFVISLSASLLVS) form a helical membrane-spanning segment. Residues 218 to 224 (YLKRRTA) lie on the Cytoplasmic side of the membrane.

It belongs to the binding-protein-dependent transport system permease family. HisMQ subfamily. As to quaternary structure, the complex is composed of two ATP-binding proteins (GltL), two transmembrane proteins (GltJ and GltK) and a solute-binding protein (GltI).

The protein localises to the cell inner membrane. Functionally, part of the ABC transporter complex GltIJKL involved in glutamate and aspartate uptake. Probably responsible for the translocation of the substrate across the membrane. This chain is Glutamate/aspartate import permease protein GltK (gltK), found in Escherichia coli O157:H7.